A 142-amino-acid chain; its full sequence is HTH-type transcriptional repressor NsrR (142 aa).

The HTH rrf2-type domain occupies 2–129 (QLTSFTDYGL…DRHTLAELVE (128 aa)). Positions 28 to 51 (ITEVTQVYGVSRNHMVKIINQLSH) form a DNA-binding region, H-T-H motif. 3 residues coordinate [2Fe-2S] cluster: Cys91, Cys96, and Cys102.

It depends on [2Fe-2S] cluster as a cofactor.

Its function is as follows. Nitric oxide-sensitive repressor of genes involved in protecting the cell against nitrosative stress. May require iron for activity. This is HTH-type transcriptional repressor NsrR from Proteus mirabilis (strain HI4320).